A 180-amino-acid chain; its full sequence is Putative adenylate kinase (180 aa).

Residues Gly10, Gly12, Lys13, Thr14, and Thr15 each contribute to the ATP site. Residues 30 to 50 (NLRDFALEKGIGEVKGDELEV) are NMP. The interval 99-109 (ERGYSKDKIGE) is LID. Residues Arg100 and Lys138 each contribute to the ATP site.

It belongs to the adenylate kinase family. AK6 subfamily. In terms of assembly, interacts with uS11. Not a structural component of 40S pre-ribosomes, but transiently interacts with them by binding to uS11.

It carries out the reaction AMP + ATP = 2 ADP. The enzyme catalyses ATP + H2O = ADP + phosphate + H(+). Functionally, broad-specificity nucleoside monophosphate (NMP) kinase that catalyzes the reversible transfer of the terminal phosphate group between nucleoside triphosphates and monophosphates. Also has ATPase activity. Involved in the late maturation steps of the 30S ribosomal particles, specifically 16S rRNA maturation. While NMP activity is not required for ribosome maturation, ATPase activity is. Associates transiently with small ribosomal subunit protein uS11. ATP hydrolysis breaks the interaction with uS11. May temporarily remove uS11 from the ribosome to enable a conformational change of the ribosomal RNA that is needed for the final maturation step of the small ribosomal subunit. The polypeptide is Putative adenylate kinase (Pyrococcus furiosus (strain ATCC 43587 / DSM 3638 / JCM 8422 / Vc1)).